The sequence spans 125 residues: Snaclec B7 (125 aa).

3 disulfide bridges follow: C2-C13, C30-C119, and C96-C111. The region spanning 9 to 120 (HEGHCYKVFK…CNISQYFVCQ (112 aa)) is the C-type lectin domain. N112 carries N-linked (GlcNAc...) asparagine glycosylation.

This sequence belongs to the snaclec family. In terms of assembly, heterodimer; disulfide-linked. In terms of tissue distribution, expressed by the venom gland.

It is found in the secreted. In terms of biological role, interferes with one step of hemostasis (modulation of platelet aggregation, or coagulation cascade, for example). In Macrovipera lebetinus (Levantine viper), this protein is Snaclec B7.